The primary structure comprises 434 residues: Trigger factor (434 aa).

The PPIase FKBP-type domain maps to 160-245 (GDKAKINFVG…LNEVQAANLP (86 aa)).

Belongs to the FKBP-type PPIase family. Tig subfamily.

It localises to the cytoplasm. The catalysed reaction is [protein]-peptidylproline (omega=180) = [protein]-peptidylproline (omega=0). Its function is as follows. Involved in protein export. Acts as a chaperone by maintaining the newly synthesized protein in an open conformation. Functions as a peptidyl-prolyl cis-trans isomerase. This Shewanella halifaxensis (strain HAW-EB4) protein is Trigger factor.